Reading from the N-terminus, the 197-residue chain is Imidazoleglycerol-phosphate dehydratase (197 aa).

Belongs to the imidazoleglycerol-phosphate dehydratase family.

Its subcellular location is the cytoplasm. The catalysed reaction is D-erythro-1-(imidazol-4-yl)glycerol 3-phosphate = 3-(imidazol-4-yl)-2-oxopropyl phosphate + H2O. Its pathway is amino-acid biosynthesis; L-histidine biosynthesis; L-histidine from 5-phospho-alpha-D-ribose 1-diphosphate: step 6/9. The polypeptide is Imidazoleglycerol-phosphate dehydratase (Rhodopseudomonas palustris (strain ATCC BAA-98 / CGA009)).